A 338-amino-acid chain; its full sequence is Malate dehydrogenase, mitochondrial (338 aa).

A mitochondrion-targeting transit peptide spans 1-24 (MLSALARPASAVLRRSFSTSAQNN). Residues 31 to 37 (GASGGIG) and Asp-57 each bind NAD(+). An O-linked (GlcNAc) serine glycan is attached at Ser-33. N6-acetyllysine; alternate is present on residues Lys-78 and Lys-91. An N6-succinyllysine; alternate mark is found at Lys-78 and Lys-91. Substrate contacts are provided by Arg-104 and Arg-110. NAD(+)-binding positions include Asn-117 and 140 to 142 (IAN). Asn-142 is a binding site for substrate. Residue Lys-165 is modified to N6-acetyllysine. Arg-176 contacts substrate. Lys-185 carries the N6-acetyllysine; alternate modification. Lys-185 bears the N6-succinyllysine; alternate mark. The active-site Proton acceptor is the His-200. Lys-203 is modified (N6-succinyllysine). Lys-215 and Lys-239 each carry N6-acetyllysine; alternate. An N6-succinyllysine; alternate mark is found at Lys-215 and Lys-239. Lys-239 carries the N6-malonyllysine; alternate modification. Ser-246 is subject to Phosphoserine. Position 251 (Met-251) interacts with NAD(+). N6-succinyllysine is present on Lys-269. N6-acetyllysine; alternate is present on residues Lys-296, Lys-301, Lys-307, Lys-314, and Lys-324. An N6-succinyllysine; alternate mark is found at Lys-296, Lys-301, Lys-307, Lys-314, and Lys-324. Lys-307 bears the N6-malonyllysine; alternate mark. The residue at position 326 (Ser-326) is a Phosphoserine. Lys-328, Lys-329, and Lys-335 each carry N6-acetyllysine; alternate. The residue at position 328 (Lys-328) is an N6-succinyllysine; alternate. Lys-329 is modified (N6-malonyllysine; alternate). Residue Lys-335 is modified to N6-succinyllysine; alternate.

The protein belongs to the LDH/MDH superfamily. MDH type 1 family. As to quaternary structure, homodimer. In terms of processing, acetylation is enhanced after treatment either with trichostin A (TCA) or with nicotinamide (NAM) with the appearance of tri- and tetraacetylations. Glucose also increases acetylation.

The protein resides in the mitochondrion matrix. It carries out the reaction (S)-malate + NAD(+) = oxaloacetate + NADH + H(+). With respect to regulation, enzyme activity is enhanced by acetylation. In Pongo abelii (Sumatran orangutan), this protein is Malate dehydrogenase, mitochondrial (MDH2).